The sequence spans 79 residues: Protein RALF-like 35 (79 aa).

Positions 1–29 (MAAHKMSLTSLFFVSIVIVLSLFSGFGEG) are cleaved as a signal peptide. 2 disulfide bridges follow: Cys45–Cys52 and Cys66–Cys72. Asn68 carries N-linked (GlcNAc...) asparagine glycosylation.

This sequence belongs to the plant rapid alkalinization factor (RALF) family.

It is found in the secreted. Cell signaling peptide that may regulate plant stress, growth, and development. Mediates a rapid alkalinization of extracellular space by mediating a transient increase in the cytoplasmic Ca(2+) concentration leading to a calcium-dependent signaling events through a cell surface receptor and a concomitant activation of some intracellular mitogen-activated protein kinases. The sequence is that of Protein RALF-like 35 from Arabidopsis thaliana (Mouse-ear cress).